An 875-amino-acid polypeptide reads, in one-letter code: Aminopeptidase M1-B (875 aa).

A required for membrane association region spans residues 96–203 (IGEGVLKMDF…MSTYLVAIVV (108 aa)). Substrate contacts are provided by residues E136 and 269–273 (GAMEN). H305 is a binding site for Zn(2+). E306 serves as the catalytic Proton acceptor. H309 and E328 together coordinate Zn(2+). The short motif at 722 to 723 (LL) is the Dileucine internalization motif element.

This sequence belongs to the peptidase M1 family. As to quaternary structure, homodimer. It depends on Zn(2+) as a cofactor.

It is found in the membrane. Its subcellular location is the microsome membrane. The protein resides in the cytoplasm. The enzyme catalyses Release of an N-terminal amino acid, Xaa-|-Yaa- from a peptide, amide or arylamide. Xaa is preferably Ala, but may be most amino acids including Pro (slow action). When a terminal hydrophobic residue is followed by a prolyl residue, the two may be released as an intact Xaa-Pro dipeptide.. The chain is Aminopeptidase M1-B from Oryza sativa subsp. japonica (Rice).